The sequence spans 206 residues: MQPFRTLHSTVTPLDRVNVDTDQIIPKQFLKRIERTGYGEFLFFDWRQDPAFELNQPRYKGSQILVANKNFGCGSSREHAAWALGDFGFRCVISSSFADIFHSNAGKNGILLVKLSEGDVNTLLERAQKTQGYSLTVSLEEQTVKDGQGFSDSFEIDAFRRYCLLEGLDDIGLTMRYQDKLDAFEKEHDGKFWLAPRGGLAASRTS.

Belongs to the LeuD family. LeuD type 1 subfamily. In terms of assembly, heterodimer of LeuC and LeuD.

The enzyme catalyses (2R,3S)-3-isopropylmalate = (2S)-2-isopropylmalate. It functions in the pathway amino-acid biosynthesis; L-leucine biosynthesis; L-leucine from 3-methyl-2-oxobutanoate: step 2/4. In terms of biological role, catalyzes the isomerization between 2-isopropylmalate and 3-isopropylmalate, via the formation of 2-isopropylmaleate. This is 3-isopropylmalate dehydratase small subunit from Acidobacterium capsulatum (strain ATCC 51196 / DSM 11244 / BCRC 80197 / JCM 7670 / NBRC 15755 / NCIMB 13165 / 161).